The primary structure comprises 529 residues: Pheophorbide a oxygenase, chloroplastic (529 aa).

Disordered regions lie at residues 1–24 and 46–72; these read MPVM…RRVP and LRVA…TSSA. Residues 1–47 constitute a chloroplast transit peptide; that stretch reads MPVMAPTASLLLSPRPLPASRRVPSLPALSASGRLRLRRARADTRLR. A Rieske domain is found at 82-194; that stretch reads WYPVSLVEDL…TLVSQGLLFV (113 aa). Positions 124, 126, 144, and 147 each coordinate [2Fe-2S] cluster.

Requires [2Fe-2S] cluster as cofactor. In terms of tissue distribution, expressed in leaves. Expressed at low levels in roots, stems, panicles and seeds.

The protein localises to the plastid. It is found in the chloroplast. It catalyses the reaction pheophorbide a + 2 reduced [2Fe-2S]-[ferredoxin] + O2 + 2 H(+) = red chlorophyll catabolite + 2 oxidized [2Fe-2S]-[ferredoxin]. The protein operates within porphyrin-containing compound metabolism; chlorophyll degradation. Its function is as follows. Catalyzes the key reaction of chlorophyll catabolism, porphyrin macrocycle cleavage of pheophorbide a (pheide a) to a primary fluorescent catabolite (pFCC). Works in a two-step reaction with red chlorophyll catabolite reductase (RCCR). Creates the intermediate RCC through the opening of the porphyrin macrocycle by the introduction of one atom of molecular oxygen at the alpha-methine bridge. Seems to be specific for pheide a. Belongs to the chlorophyll catabolic enzymes (CCEs). May play a role in senescence and response to wounding. This chain is Pheophorbide a oxygenase, chloroplastic, found in Oryza sativa subsp. japonica (Rice).